A 999-amino-acid chain; its full sequence is Sarcoplasmic/endoplasmic reticulum calcium ATPase 3 (999 aa).

At Met-1 the chain carries N-acetylmethionine. Over 1–48 (MEEAHLLPAADVLRRFSVTAEGGLSPAQVTRARERYGPNELPTEEGKS) the chain is Cytoplasmic. The residue at position 17 (Ser-17) is a Phosphoserine. At Thr-19 the chain carries Phosphothreonine. Ser-25 is subject to Phosphoserine. Residues 49 to 69 (LWELVLEQFEDLLVRILLLAA) traverse the membrane as a helical segment. The Extracellular segment spans residues 70-89 (LVSFVLACFEEGEETTTAFV). Residues 90–110 (EPLVIVLILVANAVVGVWQER) form a helical membrane-spanning segment. Topologically, residues 111 to 253 (NAENAIEALK…PERTPLQQKL (143 aa)) are cytoplasmic. The chain crosses the membrane as a helical span at residues 254-273 (DEFGRQLSRAISVICMAVWV). At 274–295 (INIGHFADPAHGGSWLRGAVYY) the chain is on the extracellular side. A helical transmembrane segment spans residues 296-313 (FKIAVALAVAAIPEGLPA). Residues Val-304, Ala-305, Ile-307, and Glu-309 each coordinate Ca(2+). The Cytoplasmic portion of the chain corresponds to 314-757 (VITTCLALGT…EEGRAIYSNM (444 aa)). The active-site 4-aspartylphosphate intermediate is the Asp-351. Residues Asp-351 and Thr-353 each coordinate Mg(2+). An ATP-binding site is contributed by Thr-353. The interaction with phospholamban 1 stretch occupies residues 370–400 (AEAEAGTCRLHEFTISGTTYAPEGEVRQGEQ). At Thr-415 the chain carries Phosphothreonine. Residues Glu-442, Arg-489, Lys-515, Arg-560, Thr-625, Gly-626, and Asp-627 each contribute to the ATP site. Ser-662 is subject to Phosphoserine. ATP-binding residues include Arg-678 and Lys-684. Asp-703 contacts Mg(2+). Asn-706 provides a ligand contact to ATP. The helical transmembrane segment at 758–777 (KQFIRYLISSNVGEVVCIFL) threads the bilayer. Residues Asn-768 and Glu-771 each contribute to the Ca(2+) site. Over 778–787 (TAILGLPEAL) the chain is Extracellular. The helical transmembrane segment at 788–808 (IPVQLLWVNLVTDGLPATALG) threads the bilayer. An interaction with phospholamban 2 region spans residues 788–808 (IPVQLLWVNLVTDGLPATALG). Residues Asn-796, Thr-799, and Asp-800 each coordinate Ca(2+). Over 809–828 (FNPPDLDIMEKRPRNPREAL) the chain is Cytoplasmic. The chain crosses the membrane as a helical span at residues 829-851 (ISGWLFFRYLAIGVYVGLATVAA). Residues 852 to 897 (ATWWFLYDAEGPQVTFYQLRNFLKCSEDNPLFTGTDCEVFESRFPT) lie on the Extracellular side of the membrane. An intrachain disulfide couples Cys-876 to Cys-888. The chain crosses the membrane as a helical span at residues 898–917 (TMALSVLVTTEMCNALNSVS). Residue Glu-908 participates in Ca(2+) binding. Residues 918–930 (ENQSLLRMPPWLN) lie on the Cytoplasmic side of the membrane. Residues 931-949 (PWLLAAVAMSMALHFLILL) form a helical membrane-spanning segment. Topologically, residues 950 to 964 (VPPLPLIFQVTPLSG) are extracellular. The chain crosses the membrane as a helical span at residues 965-985 (RQWVVVLQISLPVILLDEALK). The Cytoplasmic segment spans residues 986–999 (YLSRKHVDEEKGRQ).

This sequence belongs to the cation transport ATPase (P-type) (TC 3.A.3) family. Type IIA subfamily. In terms of assembly, interacts with sarcolipin (SLN). Interacts with phospholamban (PLN). Interacts with myoregulin (MRLN). Interacts with DWORF. Interacts with VMP1. Interacts with TUNAR; the interaction occurs at low levels in low glucose conditions and is increased by high glucose levels. Mg(2+) serves as cofactor. In terms of tissue distribution, expressed in endothelial tissues.

It is found in the endoplasmic reticulum membrane. The protein localises to the sarcoplasmic reticulum membrane. It catalyses the reaction Ca(2+)(in) + ATP + H2O = Ca(2+)(out) + ADP + phosphate + H(+). Inhibited by sarcolipin (SLN), phospholamban (PLN) and myoregulin (MRLN). Enhanced by DWORF; DWORF increases activity by displacing sarcolipin (SLN), phospholamban (PLN) and myoregulin (MRLN). This magnesium-dependent enzyme catalyzes the hydrolysis of ATP coupled with the transport of calcium. Transports calcium ions from the cytosol into the sarcoplasmic/endoplasmic reticulum lumen. Contributes to calcium sequestration involved in muscular excitation/contraction. The sequence is that of Sarcoplasmic/endoplasmic reticulum calcium ATPase 3 (ATP2A3) from Sus scrofa (Pig).